Reading from the N-terminus, the 330-residue chain is L-asparaginase (330 aa).

Residues 4 to 330 (PQVTILATGG…EAIQKIFSTY (327 aa)) form the Asparaginase/glutaminase domain. The O-isoaspartyl threonine intermediate role is filled by threonine 14. 93 to 94 (TD) contacts substrate.

It belongs to the asparaginase 1 family. As to quaternary structure, homotetramer.

Its subcellular location is the cytoplasm. It carries out the reaction L-asparagine + H2O = L-aspartate + NH4(+). In Wolinella succinogenes (strain ATCC 29543 / DSM 1740 / CCUG 13145 / JCM 31913 / LMG 7466 / NCTC 11488 / FDC 602W) (Vibrio succinogenes), this protein is L-asparaginase (ansA).